The sequence spans 93 residues: Probable Fe(2+)-trafficking protein (93 aa).

This sequence belongs to the Fe(2+)-trafficking protein family.

Functionally, could be a mediator in iron transactions between iron acquisition and iron-requiring processes, such as synthesis and/or repair of Fe-S clusters in biosynthetic enzymes. The chain is Probable Fe(2+)-trafficking protein from Polaromonas naphthalenivorans (strain CJ2).